A 171-amino-acid chain; its full sequence is Large ribosomal subunit protein uL10 (171 aa).

This sequence belongs to the universal ribosomal protein uL10 family. As to quaternary structure, part of the ribosomal stalk of the 50S ribosomal subunit. The N-terminus interacts with L11 and the large rRNA to form the base of the stalk. The C-terminus forms an elongated spine to which L12 dimers bind in a sequential fashion forming a multimeric L10(L12)X complex.

Forms part of the ribosomal stalk, playing a central role in the interaction of the ribosome with GTP-bound translation factors. This is Large ribosomal subunit protein uL10 from Methylocella silvestris (strain DSM 15510 / CIP 108128 / LMG 27833 / NCIMB 13906 / BL2).